A 482-amino-acid polypeptide reads, in one-letter code: Potential E3 ubiquitin-protein ligase ariadne-2 (482 aa).

A TRIAD supradomain region spans residues 125 to 334 (AKGYCSVCAM…SEYYECSRYK (210 aa)). 18 residues coordinate Zn(2+): Cys-129, Cys-132, Cys-145, His-147, Cys-150, Cys-153, Cys-172, Cys-177, Cys-218, Cys-223, Cys-239, Cys-242, Cys-247, Cys-250, His-255, Cys-260, Cys-287, and Cys-290. The RING-type 1 zinc-finger motif lies at 129–177 (CSVCAMDGYTELPHLTCGHCFCEHCWKSHVESRLSEGVASRIECMESEC). The IBR-type zinc finger occupies 198–260 (LKYERFLLRD…GADYHAPTSC (63 aa)). The RING-type 2; atypical zinc-finger motif lies at 287 to 316 (CPQCHSCIEKAGGCNHIQCTRCRHHFCWMC). Residue Cys-300 is part of the active site. Zn(2+) is bound by residues Cys-305, Cys-308, Cys-313, Cys-316, His-323, and Cys-330. The stretch at 433–459 (FEYQQAQLEKEVEELAWAVERADGTAR) forms a coiled coil.

The protein belongs to the RBR family. Ariadne subfamily.

The protein localises to the nucleus. It carries out the reaction [E2 ubiquitin-conjugating enzyme]-S-ubiquitinyl-L-cysteine + [acceptor protein]-L-lysine = [E2 ubiquitin-conjugating enzyme]-L-cysteine + [acceptor protein]-N(6)-ubiquitinyl-L-lysine.. Might act as an E3 ubiquitin-protein ligase, or as part of E3 complex, which accepts ubiquitin from specific E2 ubiquitin-conjugating enzymes, such as UBC-2/UBE2L3, and then transfers it to substrates. This Caenorhabditis elegans protein is Potential E3 ubiquitin-protein ligase ariadne-2.